The following is a 494-amino-acid chain: O-acetyltransferase ptmV (494 aa).

The segment at 181–203 is disordered; it reads ESQQDSREKLRHSGGPPDPRFDH.

This sequence belongs to the fumigaclavine B O-acetyltransferase family. Monomer.

The protein operates within secondary metabolite biosynthesis. In terms of biological role, O-acetyltransferase; part of the gene cluster that mediates the biosynthesis of the indole diterpenes penitrems. The geranylgeranyl diphosphate (GGPP) synthase ptmG catalyzes the first step in penitrem biosynthesis via conversion of farnesyl pyrophosphate and isopentyl pyrophosphate into geranylgeranyl pyrophosphate (GGPP). Condensation of indole-3-glycerol phosphate with GGPP by the prenyl transferase ptmC then forms 3-geranylgeranylindole (3-GGI). Epoxidation by the FAD-dependent monooxygenase ptmM leads to a epoxidized-GGI that is substrate of the terpene cyclase ptmB for cyclization to yield paspaline. Paspaline is subsequently converted to 13-desoxypaxilline by the cytochrome P450 monooxygenase ptmP, the latter being then converted to paxilline by the cytochrome P450 monooxygenase ptmQ. Paxilline is converted to beta-paxitriol via C-10 ketoreduction by the short-chain dehydrogenase ptmH which can be monoprenylated at the C-20 by the indole diterpene prenyltransferase ptmD. A two-step elimination (acetylation and elimination) process performed by the O-acetyltransferase ptmV and ptmI leads to the production of the prenylated form of penijanthine. The FAD-linked oxidoreductase ptmO then converts the prenylated form of penijanthine into PC-M5 which is in turn transformed into PC-M4 by the aromatic dimethylallyltransferase ptmE. Five sequential oxidative transformations performed by the cytochrome P450 monooxygenases ptmK, ptmU, ptmL, ptmN and ptmJ yield the various penitrem compounds. PtmK, ptmU and ptmM are involved in the formation of the key bicyclic ring of penitrem C via the formation of the intermediates secopenitrem D and penitrem D. PtmL catalyzes the epoxidation of penitrem D and C to yield penitrem B and F, respectively. PtmJ catalyzes the last benzylic hydroxylation to convert penitrem B to prenitrem E and penitrem F to penitrem A. This is O-acetyltransferase ptmV from Penicillium ochrochloron.